The chain runs to 338 residues: MRRLNRKNNEALKKLNDRQRKVLYCIVREYIENKKPVSSQRVLEVSNIEFSSATIRNDMKKLEYLGYIYQPHTSAGRIPTDKGLRFYYEEMLKISKETSEADLAVETFKSMPLADPEKVLFLAGNLLARLTEGYVLIERPNTRDLKILRVMLIPVSEDYLIFSILTEFGVSKVTPIKTQERLNWEEIERQLNFLLRGRTVGEVLMGKIESLKGSGFLRLIESLIGETVERYLDAGLENLLKDETLTLEDIRNLLEEVKDQKFLESLVGEGITVRIGREIGRKKLEKFAVFSGKYFKGESPIGSVYLFTSKVTKYDRNHRVFEYILNRLSEYFTSTSRR.

It belongs to the HrcA family.

Functionally, negative regulator of class I heat shock genes (grpE-dnaK-dnaJ and groELS operons). Prevents heat-shock induction of these operons. This chain is Heat-inducible transcription repressor HrcA, found in Thermotoga maritima (strain ATCC 43589 / DSM 3109 / JCM 10099 / NBRC 100826 / MSB8).